A 351-amino-acid polypeptide reads, in one-letter code: Pentatricopeptide repeat-containing protein At2g40240, mitochondrial (351 aa).

Residues 1-27 constitute a mitochondrion transit peptide; it reads MSLLRRRFVKQSVNCITFLQILAERSF. PPR repeat units follow at residues 106-140, 141-175, 176-210, 211-245, 246-280, and 281-315; these read RKNA…RLGL, TPST…SVSM, DVTA…GNSP, DSRS…GVTV, LYST…DLRL, and DSES…GLRM.

The protein belongs to the PPR family. P subfamily.

It is found in the mitochondrion. The polypeptide is Pentatricopeptide repeat-containing protein At2g40240, mitochondrial (Arabidopsis thaliana (Mouse-ear cress)).